A 668-amino-acid chain; its full sequence is NADH-ubiquinone oxidoreductase chain 5 (668 aa).

The next 18 helical transmembrane spans lie at 1–21 (MYII…LFGH), 31–51 (IAVG…YEIL), 81–101 (LTSI…LYSM), 111–131 (TRFF…VTAD), 133–153 (FVQL…LINF), 178–198 (LFFG…SVIF), 211–231 (LLGY…IGVV), 251–271 (TPVS…FLVL), 283–303 (ILNI…TIGI), 311–331 (VIAY…GLLN), 339–359 (LTTH…VIHG), 375–395 (LMPL…GFPF), 421–441 (AIIG…LLIL), 462–482 (TNMV…GYLT), 519–539 (LLPL…YFNL), 566–586 (FDFL…YDVM), 629–649 (IVQA…IGFL), and 650–668 (YVEL…PKIK).

Belongs to the complex I subunit 5 family.

It is found in the mitochondrion inner membrane. It catalyses the reaction a ubiquinone + NADH + 5 H(+)(in) = a ubiquinol + NAD(+) + 4 H(+)(out). Functionally, core subunit of the mitochondrial membrane respiratory chain NADH dehydrogenase (Complex I) that is believed to belong to the minimal assembly required for catalysis. Complex I functions in the transfer of electrons from NADH to the respiratory chain. The immediate electron acceptor for the enzyme is believed to be ubiquinone. The polypeptide is NADH-ubiquinone oxidoreductase chain 5 (nad5) (Dictyostelium citrinum (Slime mold)).